Reading from the N-terminus, the 28-residue chain is U-actitoxin-Ate1 (28 aa).

The N-terminal stretch at M1–S15 is a signal peptide. A disulfide bond links C20 and C26.

In terms of assembly, monomer in solution. In terms of processing, may be N-glycosylated at Asn-22. Activity with this modification has not be tested. In terms of tissue distribution, highly expressed in the tentacles. Weakly expressed in acrorhagi and mesenteric filaments.

It localises to the secreted. The protein localises to the nematocyst. Its function is as follows. Probable toxin expected to be employed in prey capture and/or defense against predators (based on its abundance in tentacles). Has only a weak affinity for lipid membranes. Shows moderate cytotoxic activity against breast cancer cell lines (MCF-7 and MDA-MB-231). The protein is U-actitoxin-Ate1 of Actinia tenebrosa (Australian red waratah sea anemone).